Consider the following 502-residue polypeptide: Ribose import ATP-binding protein RbsA (502 aa).

ABC transporter domains lie at 6 to 242 (IDMT…IARD) and 253 to 496 (ALGA…SGAR). An ATP-binding site is contributed by 38 to 45 (GQNGAGKS).

Belongs to the ABC transporter superfamily. Ribose importer (TC 3.A.1.2.1) family. In terms of assembly, the complex is composed of an ATP-binding protein (RbsA), two transmembrane proteins (RbsC) and a solute-binding protein (RbsB).

The protein localises to the cell inner membrane. The enzyme catalyses D-ribose(out) + ATP + H2O = D-ribose(in) + ADP + phosphate + H(+). Part of the ABC transporter complex RbsABC involved in ribose import. Responsible for energy coupling to the transport system. In Cereibacter sphaeroides (strain ATCC 17023 / DSM 158 / JCM 6121 / CCUG 31486 / LMG 2827 / NBRC 12203 / NCIMB 8253 / ATH 2.4.1.) (Rhodobacter sphaeroides), this protein is Ribose import ATP-binding protein RbsA.